The sequence spans 212 residues: Pyridoxine/pyridoxamine 5'-phosphate oxidase (212 aa).

FMN is bound by residues 61 to 66, 76 to 77, Lys83, and Gln105; these read RSVLLK and YT. Lys66 contributes to the substrate binding site. Residues Tyr123, Arg127, and Ser131 each coordinate substrate. Residues 140–141 and Trp185 each bind FMN; that span reads QS. 191–193 contributes to the substrate binding site; sequence RLH. Residue Arg195 participates in FMN binding.

It belongs to the pyridoxamine 5'-phosphate oxidase family. Homodimer. Requires FMN as cofactor.

It catalyses the reaction pyridoxamine 5'-phosphate + O2 + H2O = pyridoxal 5'-phosphate + H2O2 + NH4(+). The catalysed reaction is pyridoxine 5'-phosphate + O2 = pyridoxal 5'-phosphate + H2O2. Its pathway is cofactor metabolism; pyridoxal 5'-phosphate salvage; pyridoxal 5'-phosphate from pyridoxamine 5'-phosphate: step 1/1. It participates in cofactor metabolism; pyridoxal 5'-phosphate salvage; pyridoxal 5'-phosphate from pyridoxine 5'-phosphate: step 1/1. Functionally, catalyzes the oxidation of either pyridoxine 5'-phosphate (PNP) or pyridoxamine 5'-phosphate (PMP) into pyridoxal 5'-phosphate (PLP). The sequence is that of Pyridoxine/pyridoxamine 5'-phosphate oxidase from Dichelobacter nodosus (strain VCS1703A).